The following is a 162-amino-acid chain: Transcriptional repressor NrdR (162 aa).

The tract at residues 1–21 is disordered; it reads MNCPDCGDEQTRVIDTETSAD. A zinc finger lies at 3-34; that stretch reads CPDCGDEQTRVIDTETSADGTSVRRRRECQRC. Positions 49-139 constitute an ATP-cone domain; the sequence is LQVKKRNGTI…VYKAFSEPQE (91 aa).

Belongs to the NrdR family. Zn(2+) is required as a cofactor.

Functionally, negatively regulates transcription of bacterial ribonucleotide reductase nrd genes and operons by binding to NrdR-boxes. The chain is Transcriptional repressor NrdR from Halorubrum lacusprofundi (strain ATCC 49239 / DSM 5036 / JCM 8891 / ACAM 34).